A 961-amino-acid polypeptide reads, in one-letter code: Glycine dehydrogenase (decarboxylating) (961 aa).

Lysine 702 bears the N6-(pyridoxal phosphate)lysine mark.

It belongs to the GcvP family. In terms of assembly, the glycine cleavage system is composed of four proteins: P, T, L and H. The cofactor is pyridoxal 5'-phosphate.

It catalyses the reaction N(6)-[(R)-lipoyl]-L-lysyl-[glycine-cleavage complex H protein] + glycine + H(+) = N(6)-[(R)-S(8)-aminomethyldihydrolipoyl]-L-lysyl-[glycine-cleavage complex H protein] + CO2. Its function is as follows. The glycine cleavage system catalyzes the degradation of glycine. The P protein binds the alpha-amino group of glycine through its pyridoxal phosphate cofactor; CO(2) is released and the remaining methylamine moiety is then transferred to the lipoamide cofactor of the H protein. The sequence is that of Glycine dehydrogenase (decarboxylating) from Rhodopseudomonas palustris (strain BisA53).